The following is a 305-amino-acid chain: UDP-3-O-acyl-N-acetylglucosamine deacetylase (305 aa).

3 residues coordinate Zn(2+): H79, H238, and D242. H265 functions as the Proton donor in the catalytic mechanism.

Belongs to the LpxC family. Zn(2+) serves as cofactor.

The enzyme catalyses a UDP-3-O-[(3R)-3-hydroxyacyl]-N-acetyl-alpha-D-glucosamine + H2O = a UDP-3-O-[(3R)-3-hydroxyacyl]-alpha-D-glucosamine + acetate. Its pathway is glycolipid biosynthesis; lipid IV(A) biosynthesis; lipid IV(A) from (3R)-3-hydroxytetradecanoyl-[acyl-carrier-protein] and UDP-N-acetyl-alpha-D-glucosamine: step 2/6. Its function is as follows. Catalyzes the hydrolysis of UDP-3-O-myristoyl-N-acetylglucosamine to form UDP-3-O-myristoylglucosamine and acetate, the committed step in lipid A biosynthesis. The chain is UDP-3-O-acyl-N-acetylglucosamine deacetylase from Shigella boydii serotype 4 (strain Sb227).